Here is a 464-residue protein sequence, read N- to C-terminus: MTEEKTPKQIVELLDKYIIGQNEAKKSVAVALYNRYRRLQLPKQMQQDITPKNMLMAGPTGVGKTEIARRLAKIVDAPFVKVEATKFTEVGYVGRDVESMVRDLVEEAVRMEEKDQFEHVKMQATKKANNRLVKLIVPGIKRENRENSMQQMMQMLSGNFNMNQPQDNEEVTDAIRNERLSVADQLNKGLLENREVTIEVEQAPKVNPMGDMMGQMGIDMSSLMGDLMPKKTVKRTLKVSDAREVLIQEESKKLINYDSLYQRAIERTQQNGIIFIDEIDKITAGNKKTSGEVSREGVQRDILPIVEGSTVSTKYGPVSTDHILFIAAGAFAESKPSDLIPELQGRFPIRVELNALTQEDFVKILKDPQNSLLKQYIALLKADGIKLVFTQEAIDRIAQIAFEVNQGTDNIGARRLATILEKLLEDVLYEGPDMNMGEITITQKYVDQKLSDIIINKDLTKFIL.

ATP is bound by residues I19, 61-66 (GVGKTE), D277, E342, and R414.

The protein belongs to the ClpX chaperone family. HslU subfamily. A double ring-shaped homohexamer of HslV is capped on each side by a ring-shaped HslU homohexamer. The assembly of the HslU/HslV complex is dependent on binding of ATP.

The protein resides in the cytoplasm. In terms of biological role, ATPase subunit of a proteasome-like degradation complex; this subunit has chaperone activity. The binding of ATP and its subsequent hydrolysis by HslU are essential for unfolding of protein substrates subsequently hydrolyzed by HslV. HslU recognizes the N-terminal part of its protein substrates and unfolds these before they are guided to HslV for hydrolysis. This is ATP-dependent protease ATPase subunit HslU from Lactobacillus johnsonii (strain CNCM I-12250 / La1 / NCC 533).